The sequence spans 189 residues: Peptidyl-tRNA hydrolase (189 aa).

TRNA is bound at residue Tyr14. The active-site Proton acceptor is the His19. TRNA-binding residues include Phe61, Asn63, and Asn109.

This sequence belongs to the PTH family. As to quaternary structure, monomer.

The protein localises to the cytoplasm. It catalyses the reaction an N-acyl-L-alpha-aminoacyl-tRNA + H2O = an N-acyl-L-amino acid + a tRNA + H(+). Hydrolyzes ribosome-free peptidyl-tRNAs (with 1 or more amino acids incorporated), which drop off the ribosome during protein synthesis, or as a result of ribosome stalling. In terms of biological role, catalyzes the release of premature peptidyl moieties from peptidyl-tRNA molecules trapped in stalled 50S ribosomal subunits, and thus maintains levels of free tRNAs and 50S ribosomes. This chain is Peptidyl-tRNA hydrolase, found in Sulfurovum sp. (strain NBC37-1).